A 705-amino-acid chain; its full sequence is Probable cyclic nucleotide-gated ion channel 16 (705 aa).

Topologically, residues methionine 1–histidine 57 are cytoplasmic. The chain crosses the membrane as a helical span at residues isoleucine 58 to isoleucine 78. Residues valine 79–arginine 91 lie on the Extracellular side of the membrane. A helical membrane pass occupies residues phenylalanine 92–leucine 112. Residues leucine 113–glutamate 147 are Cytoplasmic-facing. A helical membrane pass occupies residues phenylalanine 148 to proline 168. Residues asparagine 169–asparagine 180 are Extracellular-facing. A helical transmembrane segment spans residues histidine 181–leucine 201. Topologically, residues asparagine 202–tyrosine 222 are cytoplasmic. The chain crosses the membrane as a helical span at residues asparagine 223–isoleucine 243. Topologically, residues glutamine 244–threonine 353 are extracellular. The chain crosses the membrane as a helical span at residues isoleucine 354 to valine 374. Residues glutamine 375–phenylalanine 705 are Cytoplasmic-facing. Residues phenylalanine 457–lysine 580 and glutamate 528 contribute to the a nucleoside 3',5'-cyclic phosphate site. Residues phenylalanine 573 to tyrosine 588 are calmodulin-binding. Residues arginine 593–glutamate 622 form the IQ domain. Disordered regions lie at residues glutamate 636–glutamine 655 and arginine 672–phenylalanine 705. Positions serine 642 to glutamine 655 are enriched in low complexity.

This sequence belongs to the cyclic nucleotide-gated cation channel (TC 1.A.1.5) family. Homotetramer or heterotetramer.

It is found in the cell membrane. Its function is as follows. Putative cyclic nucleotide-gated ion channel. This is Probable cyclic nucleotide-gated ion channel 16 (CNGC16) from Arabidopsis thaliana (Mouse-ear cress).